The sequence spans 100 residues: ESAT-6-like protein EsxB (100 aa).

Residues 80–100 (GTQYTSTDEDQAGTLASSMNI) are disordered.

The protein belongs to the WXG100 family. CFP-10 subfamily. Forms a tight 1:1 complex with EsxA. An artificial EsxA-EsxB heterodimer interacts with EspA.

Its subcellular location is the secreted. Functionally, an exported protein. Plays a role in DNA conjugation, in at least a donor strain. The sequence is that of ESAT-6-like protein EsxB from Mycolicibacterium smegmatis (strain ATCC 700084 / mc(2)155) (Mycobacterium smegmatis).